Consider the following 323-residue polypeptide: tRNA U34 carboxymethyltransferase (323 aa).

Residues Lys91, Trp105, Lys110, Gly130, 181–182, Met196, Tyr200, and Arg315 contribute to the carboxy-S-adenosyl-L-methionine site; that span reads IE.

It belongs to the class I-like SAM-binding methyltransferase superfamily. CmoB family. Homotetramer.

It carries out the reaction carboxy-S-adenosyl-L-methionine + 5-hydroxyuridine(34) in tRNA = 5-carboxymethoxyuridine(34) in tRNA + S-adenosyl-L-homocysteine + H(+). Catalyzes carboxymethyl transfer from carboxy-S-adenosyl-L-methionine (Cx-SAM) to 5-hydroxyuridine (ho5U) to form 5-carboxymethoxyuridine (cmo5U) at position 34 in tRNAs. In Sodalis glossinidius (strain morsitans), this protein is tRNA U34 carboxymethyltransferase.